Here is a 26-residue protein sequence, read N- to C-terminus: Toxin TdII-1 (26 aa).

The protein belongs to the long (4 C-C) scorpion toxin superfamily. Sodium channel inhibitor family. Beta subfamily. In terms of tissue distribution, expressed by the venom gland.

It localises to the secreted. In terms of biological role, beta toxins bind voltage-independently at site-4 of sodium channels (Nav) and shift the voltage of activation toward more negative potentials thereby affecting sodium channel activation and promoting spontaneous and repetitive firing. This toxin is active against mammals and crustaceans. The sequence is that of Toxin TdII-1 from Tityus discrepans (Venezuelan scorpion).